A 280-amino-acid polypeptide reads, in one-letter code: Phosphatidylglycerol--prolipoprotein diacylglyceryl transferase (280 aa).

Transmembrane regions (helical) follow at residues 59–79 (FLTW…ILFY) and 97–117 (GGMS…LFTW). Arg-142 contacts a 1,2-diacyl-sn-glycero-3-phospho-(1'-sn-glycerol). Transmembrane regions (helical) follow at residues 207 to 227 (GFLA…CECF) and 233 to 253 (FIGF…PMAI).

This sequence belongs to the Lgt family.

It localises to the cell inner membrane. The catalysed reaction is L-cysteinyl-[prolipoprotein] + a 1,2-diacyl-sn-glycero-3-phospho-(1'-sn-glycerol) = an S-1,2-diacyl-sn-glyceryl-L-cysteinyl-[prolipoprotein] + sn-glycerol 1-phosphate + H(+). It participates in protein modification; lipoprotein biosynthesis (diacylglyceryl transfer). Functionally, catalyzes the transfer of the diacylglyceryl group from phosphatidylglycerol to the sulfhydryl group of the N-terminal cysteine of a prolipoprotein, the first step in the formation of mature lipoproteins. The sequence is that of Phosphatidylglycerol--prolipoprotein diacylglyceryl transferase from Gluconacetobacter diazotrophicus (strain ATCC 49037 / DSM 5601 / CCUG 37298 / CIP 103539 / LMG 7603 / PAl5).